Consider the following 129-residue polypeptide: Small ribosomal subunit protein uS12 (129 aa).

Disordered stretches follow at residues 1 to 25 and 110 to 129; these read MPTY…PALE and RKQG…VTKK. Residues 10 to 20 are compositionally biased toward basic residues; the sequence is FGRKSKTRKTK.

The protein belongs to the universal ribosomal protein uS12 family. Part of the 30S ribosomal subunit. Contacts proteins S8 and S17. May interact with IF1 in the 30S initiation complex.

In terms of biological role, with S4 and S5 plays an important role in translational accuracy. Interacts with and stabilizes bases of the 16S rRNA that are involved in tRNA selection in the A site and with the mRNA backbone. Located at the interface of the 30S and 50S subunits, it traverses the body of the 30S subunit contacting proteins on the other side and probably holding the rRNA structure together. The combined cluster of proteins S8, S12 and S17 appears to hold together the shoulder and platform of the 30S subunit. In Rickettsia conorii (strain ATCC VR-613 / Malish 7), this protein is Small ribosomal subunit protein uS12.